Reading from the N-terminus, the 552-residue chain is ATP synthase subunit alpha (552 aa).

Residue 173–180 coordinates ATP; sequence GDRQTGKT. Residues 516–552 form a disordered region; it reads DGKPLVNEPAPSPLDPGLVRQESIPVHRPAARKDDEG.

Belongs to the ATPase alpha/beta chains family. In terms of assembly, F-type ATPases have 2 components, CF(1) - the catalytic core - and CF(0) - the membrane proton channel. CF(1) has five subunits: alpha(3), beta(3), gamma(1), delta(1), epsilon(1). CF(0) has three main subunits: a(1), b(2) and c(9-12). The alpha and beta chains form an alternating ring which encloses part of the gamma chain. CF(1) is attached to CF(0) by a central stalk formed by the gamma and epsilon chains, while a peripheral stalk is formed by the delta and b chains.

It is found in the cell membrane. The catalysed reaction is ATP + H2O + 4 H(+)(in) = ADP + phosphate + 5 H(+)(out). Produces ATP from ADP in the presence of a proton gradient across the membrane. The alpha chain is a regulatory subunit. This chain is ATP synthase subunit alpha, found in Frankia casuarinae (strain DSM 45818 / CECT 9043 / HFP020203 / CcI3).